Consider the following 328-residue polypeptide: Beta-ketoacyl-[acyl-carrier-protein] synthase III (328 aa).

Catalysis depends on residues cysteine 114 and histidine 253. Positions 254–258 (QANIR) are ACP-binding. Asparagine 283 is a catalytic residue.

It belongs to the thiolase-like superfamily. FabH family. In terms of assembly, homodimer.

The protein localises to the cytoplasm. The catalysed reaction is malonyl-[ACP] + acetyl-CoA + H(+) = 3-oxobutanoyl-[ACP] + CO2 + CoA. The protein operates within lipid metabolism; fatty acid biosynthesis. Functionally, catalyzes the condensation reaction of fatty acid synthesis by the addition to an acyl acceptor of two carbons from malonyl-ACP. Catalyzes the first condensation reaction which initiates fatty acid synthesis and may therefore play a role in governing the total rate of fatty acid production. Possesses both acetoacetyl-ACP synthase and acetyl transacylase activities. Its substrate specificity determines the biosynthesis of branched-chain and/or straight-chain of fatty acids. This chain is Beta-ketoacyl-[acyl-carrier-protein] synthase III, found in Clostridioides difficile (strain 630) (Peptoclostridium difficile).